We begin with the raw amino-acid sequence, 179 residues long: Bifunctional protein PyrR (179 aa).

The PRPP-binding motif lies at 99-111 (VILVDDVLYTGRT).

It belongs to the purine/pyrimidine phosphoribosyltransferase family. PyrR subfamily. Homodimer and homohexamer; in equilibrium.

It catalyses the reaction UMP + diphosphate = 5-phospho-alpha-D-ribose 1-diphosphate + uracil. In terms of biological role, regulates transcriptional attenuation of the pyrimidine nucleotide (pyr) operon by binding in a uridine-dependent manner to specific sites on pyr mRNA. This disrupts an antiterminator hairpin in the RNA and favors formation of a downstream transcription terminator, leading to a reduced expression of downstream genes. Functionally, also displays a weak uracil phosphoribosyltransferase activity which is not physiologically significant. This chain is Bifunctional protein PyrR, found in Limosilactobacillus fermentum (strain NBRC 3956 / LMG 18251) (Lactobacillus fermentum).